The following is a 318-amino-acid chain: Olfactory receptor 5M5 (318 aa).

The Extracellular segment spans residues 1-31; sequence MLAPKKMVRGNYSMVTEFILLGLTDRPELQP. Asn-11 carries an N-linked (GlcNAc...) asparagine glycan. The chain crosses the membrane as a helical span at residues 32 to 52; that stretch reads LLFVLFLVIYLITVGGNLGMM. Residues 53–60 lie on the Cytoplasmic side of the membrane; the sequence is VLIRIDSR. The chain crosses the membrane as a helical span at residues 61–81; the sequence is LHTPMYYFLASLSCLDLCYST. The Extracellular portion of the chain corresponds to 82 to 105; sequence NVTPKMLVNFLSEKKTISYAACLV. Cysteines 103 and 195 form a disulfide. A helical transmembrane segment spans residues 106 to 126; that stretch reads QCYFFIAMVITEYYMLAVMAY. At 127 to 139 the chain is on the cytoplasmic side; that stretch reads DRYMAICNPLLYS. The chain crosses the membrane as a helical span at residues 140–160; that stretch reads SKMSKGVCVRLIAGPYIYGFL. Over 161–202 the chain is Extracellular; it reads SGLMETMWTYRLTFCGSNIINHFYCADPPLIRLSCSDTFIKE. A helical membrane pass occupies residues 203-223; the sequence is TSMFVVAGFNLSNSLFIILIS. The Cytoplasmic segment spans residues 224 to 243; the sequence is YLFILIAILRMRSAEGRRKA. A helical membrane pass occupies residues 244-264; sequence FSTCGSHLVAVTVFYGTLFCM. The Extracellular segment spans residues 265 to 277; that stretch reads YVRPPTDKSVEQS. Residues 278–298 traverse the membrane as a helical segment; it reads KIIAVFYTFVSPMLNPIIYSL. The Cytoplasmic portion of the chain corresponds to 299-318; the sequence is RNKDVKHAFWKLVRRNVLSK.

This sequence belongs to the G-protein coupled receptor 1 family.

The protein localises to the cell membrane. Functionally, potential odorant receptor. The protein is Olfactory receptor 5M5 of Mus musculus (Mouse).